A 259-amino-acid chain; its full sequence is tRNA pseudouridine synthase A (259 aa).

Asp-51 serves as the catalytic Nucleophile. Tyr-109 provides a ligand contact to substrate.

Belongs to the tRNA pseudouridine synthase TruA family. As to quaternary structure, homodimer.

The catalysed reaction is uridine(38/39/40) in tRNA = pseudouridine(38/39/40) in tRNA. In terms of biological role, formation of pseudouridine at positions 38, 39 and 40 in the anticodon stem and loop of transfer RNAs. The protein is tRNA pseudouridine synthase A of Colwellia psychrerythraea (strain 34H / ATCC BAA-681) (Vibrio psychroerythus).